A 210-amino-acid chain; its full sequence is MPSNTPLPSSFDGDTDFYEENRWQKLTRRLKEEPLIPLGKSTHTLTLSPSPPSLHHPSTQKLTHPLTHPPGCILTTLALVGATRSIRAGDHNRTQRMFRARIYAQGFTLLAMVAGSMYWDSDRKKRKEFEGVLAEQKAKEKNEAWIKELEARDEEEKEMRRMRDERRRRAEGKSAASGLVVDAANAGAEEGEKTKNGIVDQMKGMVWGKK.

An HIG1 domain is found at 7–130; it reads LPSSFDGDTD…SDRKKRKEFE (124 aa). The tract at residues 38–67 is disordered; that stretch reads LGKSTHTLTLSPSPPSLHHPSTQKLTHPLT. 2 helical membrane-spanning segments follow: residues 66 to 82 and 102 to 119; these read LTHPPGCILTTLALVGA and IYAQGFTLLAMVAGSMYW. The stretch at 138-171 forms a coiled coil; it reads AKEKNEAWIKELEARDEEEKEMRRMRDERRRRAE. A disordered region spans residues 152–192; the sequence is RDEEEKEMRRMRDERRRRAEGKSAASGLVVDAANAGAEEGE. Residues 157–172 are compositionally biased toward basic and acidic residues; sequence KEMRRMRDERRRRAEG.

Belongs to the RCF1 family. As to quaternary structure, associates with the respiratory chain complex III/complex IV supercomplex.

It localises to the mitochondrion membrane. In terms of biological role, cytochrome c oxidase subunit which plays a role in assembly of respiratory supercomplexes. The sequence is that of Respiratory supercomplex factor 1, mitochondrial (rcf1) from Sclerotinia sclerotiorum (strain ATCC 18683 / 1980 / Ss-1) (White mold).